A 371-amino-acid chain; its full sequence is N-acetyldiaminopimelate deacetylase (371 aa).

Residue aspartate 68 is part of the active site. Residue glutamate 127 is the Proton acceptor of the active site.

Belongs to the peptidase M20A family. N-acetyldiaminopimelate deacetylase subfamily.

It carries out the reaction N-acetyl-(2S,6S)-2,6-diaminopimelate + H2O = (2S,6S)-2,6-diaminopimelate + acetate. Its pathway is amino-acid biosynthesis; L-lysine biosynthesis via DAP pathway; LL-2,6-diaminopimelate from (S)-tetrahydrodipicolinate (acetylase route): step 3/3. Functionally, catalyzes the conversion of N-acetyl-diaminopimelate to diaminopimelate and acetate. In Halalkalibacterium halodurans (strain ATCC BAA-125 / DSM 18197 / FERM 7344 / JCM 9153 / C-125) (Bacillus halodurans), this protein is N-acetyldiaminopimelate deacetylase.